The primary structure comprises 146 residues: Large ribosomal subunit protein uL15 (146 aa).

Residues 1–13 (MKLNELKPNEGSR) are compositionally biased toward basic and acidic residues. The tract at residues 1 to 54 (MKLNELKPNEGSRRNRKRVGRGTSSGYGKTAGRGQKGQLARTGGKTRLGFEGGQ) is disordered. Positions 23–35 (TSSGYGKTAGRGQ) are enriched in gly residues.

It belongs to the universal ribosomal protein uL15 family. As to quaternary structure, part of the 50S ribosomal subunit.

Binds to the 23S rRNA. This Lactobacillus gasseri (strain ATCC 33323 / DSM 20243 / BCRC 14619 / CIP 102991 / JCM 1131 / KCTC 3163 / NCIMB 11718 / NCTC 13722 / AM63) protein is Large ribosomal subunit protein uL15.